Reading from the N-terminus, the 103-residue chain is Sec-independent protein translocase protein TatA (103 aa).

Residues 1 to 21 (MSLGPWEIAIIVLLIIVLFGA) traverse the membrane as a helical segment. The tract at residues 42-103 (VKEMQKDDET…QNYEDPNRTP (62 aa)) is disordered. Positions 52 to 90 (PAQPEQQPQGYQHPQQIEAPQNLQQPNFQQHYQNQPQQP) are enriched in low complexity. Residues 94–103 (QNYEDPNRTP) show a composition bias toward basic and acidic residues.

The protein belongs to the TatA/E family. In terms of assembly, the Tat system comprises two distinct complexes: a TatABC complex, containing multiple copies of TatA, TatB and TatC subunits, and a separate TatA complex, containing only TatA subunits. Substrates initially bind to the TatABC complex, which probably triggers association of the separate TatA complex to form the active translocon.

It is found in the cell membrane. Its function is as follows. Part of the twin-arginine translocation (Tat) system that transports large folded proteins containing a characteristic twin-arginine motif in their signal peptide across membranes. TatA could form the protein-conducting channel of the Tat system. The chain is Sec-independent protein translocase protein TatA from Corynebacterium efficiens (strain DSM 44549 / YS-314 / AJ 12310 / JCM 11189 / NBRC 100395).